The sequence spans 310 residues: 26S proteasome non-ATPase regulatory subunit 14 (310 aa).

An MPN domain is found at V31–N166. Zn(2+) contacts are provided by H113, H115, and D126. Positions H113–D126 match the JAMM motif motif. Phosphoserine occurs at positions 150 and 224. Position 266 is a phosphothreonine (T266).

It belongs to the peptidase M67A family. PSMD14 subfamily. In terms of assembly, component of the 19S proteasome regulatory particle complex. The 26S proteasome consists of a 20S core particle (CP) and two 19S regulatory subunits (RP). The regulatory particle is made of a lid composed of 9 subunits including PSMD4, a base containing 6 ATPases and few additional components. Within the complex, PSMD4 interacts with subunit PSMD7 through their respective MPN domain. Interacts with TXNL1. As to expression, widely expressed. Highest levels in heart and skeletal muscle.

In terms of biological role, component of the 26S proteasome, a multiprotein complex involved in the ATP-dependent degradation of ubiquitinated proteins. This complex plays a key role in the maintenance of protein homeostasis by removing misfolded or damaged proteins, which could impair cellular functions, and by removing proteins whose functions are no longer required. Therefore, the proteasome participates in numerous cellular processes, including cell cycle progression, apoptosis, or DNA damage repair. The PSMD14 subunit is a metalloprotease that specifically cleaves 'Lys-63'-linked polyubiquitin chains within the complex. Plays a role in response to double-strand breaks (DSBs): acts as a regulator of non-homologous end joining (NHEJ) by cleaving 'Lys-63'-linked polyubiquitin, thereby promoting retention of JMJD2A/KDM4A on chromatin and restricting TP53BP1 accumulation. Also involved in homologous recombination repair by promoting RAD51 loading. The polypeptide is 26S proteasome non-ATPase regulatory subunit 14 (PSMD14) (Homo sapiens (Human)).